The primary structure comprises 248 residues: Myelin protein P0 (248 aa).

The N-terminal stretch at M1 to Q28 is a signal peptide. The Extracellular portion of the chain corresponds to A29 to G155. In terms of domain architecture, Ig-like V-type spans I30 to T143. C50 and C127 are joined by a disulfide. N122 is a glycosylation site (N-linked (GlcNAc...) (complex) asparagine). A helical membrane pass occupies residues V156–F176. Over Y177–K248 the chain is Cytoplasmic. S210 bears the Phosphoserine; by PKC mark. A disordered region spans residues D224–K248. S226 and S228 each carry phosphoserine. Phosphoserine; by PKC is present on residues S233 and S243.

This sequence belongs to the myelin P0 protein family. As to quaternary structure, homodimer and homotetramer. In terms of processing, N-glycosylated; contains sulfate-substituted glycan. Found only in peripheral nervous system Schwann cells.

The protein resides in the cell membrane. In terms of biological role, is an adhesion molecule necessary for normal myelination in the peripheral nervous system. It mediates adhesion between adjacent myelin wraps and ultimately drives myelin compaction. This is Myelin protein P0 (MPZ) from Bos taurus (Bovine).